A 90-amino-acid polypeptide reads, in one-letter code: RNA-binding protein Hfq (90 aa).

Residues 9–68 (DPFLNALRRERVPVSIYLVNGIKLQGQVESFDQFVILLKNTVSQMVYKHAISTVVPARPF) form the Sm domain. The segment at 71 to 90 (TGHQNAQGGYGPQDDVPSGE) is disordered.

The protein belongs to the Hfq family. Homohexamer.

RNA chaperone that binds small regulatory RNA (sRNAs) and mRNAs to facilitate mRNA translational regulation in response to envelope stress, environmental stress and changes in metabolite concentrations. Also binds with high specificity to tRNAs. The chain is RNA-binding protein Hfq from Shewanella putrefaciens (strain CN-32 / ATCC BAA-453).